A 249-amino-acid polypeptide reads, in one-letter code: Indole-3-glycerol phosphate synthase (249 aa).

It belongs to the TrpC family.

The enzyme catalyses 1-(2-carboxyphenylamino)-1-deoxy-D-ribulose 5-phosphate + H(+) = (1S,2R)-1-C-(indol-3-yl)glycerol 3-phosphate + CO2 + H2O. Its pathway is amino-acid biosynthesis; L-tryptophan biosynthesis; L-tryptophan from chorismate: step 4/5. The protein is Indole-3-glycerol phosphate synthase of Pyrobaculum aerophilum (strain ATCC 51768 / DSM 7523 / JCM 9630 / CIP 104966 / NBRC 100827 / IM2).